The following is a 610-amino-acid chain: Phosphomethylpyrimidine synthase (610 aa).

Residues Asn-216, Met-245, Tyr-274, His-310, 330-332 (SRG), 371-374 (DGLR), and Glu-410 contribute to the substrate site. A Zn(2+)-binding site is contributed by His-414. Tyr-437 serves as a coordination point for substrate. Residue His-478 participates in Zn(2+) binding. [4Fe-4S] cluster contacts are provided by Cys-558, Cys-561, and Cys-566.

The protein belongs to the ThiC family. Homodimer. It depends on [4Fe-4S] cluster as a cofactor.

It catalyses the reaction 5-amino-1-(5-phospho-beta-D-ribosyl)imidazole + S-adenosyl-L-methionine = 4-amino-2-methyl-5-(phosphooxymethyl)pyrimidine + CO + 5'-deoxyadenosine + formate + L-methionine + 3 H(+). It participates in cofactor biosynthesis; thiamine diphosphate biosynthesis. Functionally, catalyzes the synthesis of the hydroxymethylpyrimidine phosphate (HMP-P) moiety of thiamine from aminoimidazole ribotide (AIR) in a radical S-adenosyl-L-methionine (SAM)-dependent reaction. This Allorhizobium ampelinum (strain ATCC BAA-846 / DSM 112012 / S4) (Agrobacterium vitis (strain S4)) protein is Phosphomethylpyrimidine synthase.